The sequence spans 216 residues: MIITIDGPSGTGKSTLAKALAQTLQFLYCNTGAMYRTLAYARLQPDWQEVPLEDFLASPPFSFSFSKDSPLQAFYGDRLLTSELSSQEVANFASLFSKEPLVRAYMQTLQKQYATVGNCVFEGRDMGSKVFPHAEVKIFLTAKPEIRAERRLKDLPQGSLSKEALMAELIARDQADQQRECDPLVIPQDATVIDSSDLTISQILEKILPLIPSHLT.

ATP is bound at residue glycine 7–threonine 15.

Belongs to the cytidylate kinase family. Type 1 subfamily.

The protein localises to the cytoplasm. The enzyme catalyses CMP + ATP = CDP + ADP. It catalyses the reaction dCMP + ATP = dCDP + ADP. In Chlamydia trachomatis serovar D (strain ATCC VR-885 / DSM 19411 / UW-3/Cx), this protein is Cytidylate kinase.